The sequence spans 279 residues: MTRWRLDIAYDGANFSGWATQPDRRTVQGELETWIPRVLRLDQPTPLTVAGRTDAGVHARGQVAHVDLPDNVDTSAMLRRLSRVLTPDVVVKSVRPVPSTFDARFSALWRRYVYRLWDESSRPDPVTRFHVAPVRGHLDLDRLNTAGTSLLGLRDFAAFCKHREGATTIRTLLDCHAKRLDDPCGTVEVTVRADAFCHSMVRSLVGALTAVASGRRSQDWLDNVAASTSRASSVLVMPACGLTLEEVGYPSDEDLAQRAAQARSRRSHNDICDTCWEDR.

The Nucleophile role is filled by D54. Position 112 (Y112) interacts with substrate.

Belongs to the tRNA pseudouridine synthase TruA family. In terms of assembly, homodimer.

The enzyme catalyses uridine(38/39/40) in tRNA = pseudouridine(38/39/40) in tRNA. Formation of pseudouridine at positions 38, 39 and 40 in the anticodon stem and loop of transfer RNAs. The sequence is that of tRNA pseudouridine synthase A from Cutibacterium acnes (strain DSM 16379 / KPA171202) (Propionibacterium acnes).